Here is a 220-residue protein sequence, read N- to C-terminus: MNILIFGPPGSGKSTQARRITERYGLTYIASGDIIRAEIKARTPLGIEMERYLSRGDLIPDTIVNTLIISKLRRVRENFIMDGYPRTPEQVITLENYLYDHGIKLDVAIDIYITKEESVRRISGRRICSKCGAVYHVEFNPPKVPGKCDICGGELIQRPDDRPEIVEKRYDIYSKNMEPIIKFYQKQGIYVRIDGHGSIDEVWERIRPLLDYIYNQENRR.

10–15 (GSGKST) is a binding site for ATP. Residues 30 to 59 (ASGDIIRAEIKARTPLGIEMERYLSRGDLI) form an NMP region. AMP is bound by residues Arg-36, 57 to 59 (DLI), 83 to 86 (GYPR), and Gln-90. The segment at 124–161 (GRRICSKCGAVYHVEFNPPKVPGKCDICGGELIQRPDD) is LID. Arg-125 is an ATP binding site. Residues Cys-128 and Cys-131 each coordinate Zn(2+). 134–135 (VY) provides a ligand contact to ATP. Positions 148 and 151 each coordinate Zn(2+). Positions 158 and 169 each coordinate AMP. Residue Gly-197 participates in ATP binding.

The protein belongs to the adenylate kinase family. In terms of assembly, monomer.

The protein resides in the cytoplasm. The catalysed reaction is AMP + ATP = 2 ADP. Its pathway is purine metabolism; AMP biosynthesis via salvage pathway; AMP from ADP: step 1/1. Its function is as follows. Catalyzes the reversible transfer of the terminal phosphate group between ATP and AMP. Plays an important role in cellular energy homeostasis and in adenine nucleotide metabolism. In Pyrococcus abyssi (strain GE5 / Orsay), this protein is Adenylate kinase.